We begin with the raw amino-acid sequence, 516 residues long: Putative Rieske 2Fe-2S iron-sulfur protein MT3926 (516 aa).

The 88-residue stretch at 429 to 516 (LYTFFKCLTD…RGHQLRSSRP (88 aa)) folds into the Rieske domain. The [2Fe-2S] cluster site is built by Cys469, His471, Cys489, and His492.

Requires [2Fe-2S] cluster as cofactor.

This is Putative Rieske 2Fe-2S iron-sulfur protein MT3926 from Mycobacterium tuberculosis (strain CDC 1551 / Oshkosh).